The chain runs to 79 residues: Large ribosomal subunit protein bL31 (79 aa).

This sequence belongs to the bacterial ribosomal protein bL31 family. Type A subfamily. Part of the 50S ribosomal subunit.

Its function is as follows. Binds the 23S rRNA. In Nostoc sp. (strain PCC 7120 / SAG 25.82 / UTEX 2576), this protein is Large ribosomal subunit protein bL31.